Here is a 330-residue protein sequence, read N- to C-terminus: Ferredoxin--NADP reductase 2 (330 aa).

FAD-binding residues include glutamate 37, glutamine 45, tyrosine 50, valine 90, phenylalanine 124, aspartate 286, and threonine 327.

It belongs to the ferredoxin--NADP reductase type 2 family. Homodimer. FAD is required as a cofactor.

The enzyme catalyses 2 reduced [2Fe-2S]-[ferredoxin] + NADP(+) + H(+) = 2 oxidized [2Fe-2S]-[ferredoxin] + NADPH. The polypeptide is Ferredoxin--NADP reductase 2 (Shouchella clausii (strain KSM-K16) (Alkalihalobacillus clausii)).